Consider the following 302-residue polypeptide: Sulfotransferase 1C4 (302 aa).

A 3'-phosphoadenylyl sulfate-binding site is contributed by 55–60; sequence KAGTTW. 113–115 contributes to the substrate binding site; sequence KTH. H115 functions as the Proton acceptor in the catalytic mechanism. Residues R137, S145, Y200, 234–239, and 262–266 each bind 3'-phosphoadenylyl sulfate; these read TSFDVM and FMRKG.

Belongs to the sulfotransferase 1 family. Expressed at high levels in fetal lung and kidney and at low levels in fetal heart, adult kidney, ovary and spinal cord.

It is found in the cytoplasm. It localises to the cytosol. The enzyme catalyses a phenol + 3'-phosphoadenylyl sulfate = an aryl sulfate + adenosine 3',5'-bisphosphate + H(+). It carries out the reaction 17beta-estradiol + 3'-phosphoadenylyl sulfate = 17beta-estradiol 3-sulfate + adenosine 3',5'-bisphosphate + H(+). The catalysed reaction is bisphenol A + 3'-phosphoadenylyl sulfate = bisphenyl A sulfate + adenosine 3',5'-bisphosphate + H(+). In terms of biological role, sulfotransferase that utilizes 3'-phospho-5'-adenylyl sulfate (PAPS) as sulfonate donor to catalyze the sulfate conjugation of phenolic compounds. Can also sulfonate estrogenic compounds, however, the dietary flavonoids (phytoestrogen) and environmental estrogens, like bisphenol A are better substrates than 17beta-estradiol (E2). Mediates the sulfation of doxorubicin and its analog epirubicin, two antitumor anthracyclines. This Homo sapiens (Human) protein is Sulfotransferase 1C4.